We begin with the raw amino-acid sequence, 323 residues long: 4-hydroxy-3-methylbut-2-enyl diphosphate reductase (323 aa).

[4Fe-4S] cluster is bound at residue Cys13. Residues His42 and His75 each contribute to the (2E)-4-hydroxy-3-methylbut-2-enyl diphosphate site. Dimethylallyl diphosphate is bound by residues His42 and His75. His42 and His75 together coordinate isopentenyl diphosphate. Cys97 serves as a coordination point for [4Fe-4S] cluster. (2E)-4-hydroxy-3-methylbut-2-enyl diphosphate is bound at residue His125. His125 is a binding site for dimethylallyl diphosphate. An isopentenyl diphosphate-binding site is contributed by His125. Glu127 (proton donor) is an active-site residue. Thr168 contacts (2E)-4-hydroxy-3-methylbut-2-enyl diphosphate. Cys198 serves as a coordination point for [4Fe-4S] cluster. Residues Ser226, Ser227, Asn228, and Ser270 each contribute to the (2E)-4-hydroxy-3-methylbut-2-enyl diphosphate site. The dimethylallyl diphosphate site is built by Ser226, Ser227, Asn228, and Ser270. Ser226, Ser227, Asn228, and Ser270 together coordinate isopentenyl diphosphate.

It belongs to the IspH family. The cofactor is [4Fe-4S] cluster.

It carries out the reaction isopentenyl diphosphate + 2 oxidized [2Fe-2S]-[ferredoxin] + H2O = (2E)-4-hydroxy-3-methylbut-2-enyl diphosphate + 2 reduced [2Fe-2S]-[ferredoxin] + 2 H(+). The catalysed reaction is dimethylallyl diphosphate + 2 oxidized [2Fe-2S]-[ferredoxin] + H2O = (2E)-4-hydroxy-3-methylbut-2-enyl diphosphate + 2 reduced [2Fe-2S]-[ferredoxin] + 2 H(+). It participates in isoprenoid biosynthesis; dimethylallyl diphosphate biosynthesis; dimethylallyl diphosphate from (2E)-4-hydroxy-3-methylbutenyl diphosphate: step 1/1. Its pathway is isoprenoid biosynthesis; isopentenyl diphosphate biosynthesis via DXP pathway; isopentenyl diphosphate from 1-deoxy-D-xylulose 5-phosphate: step 6/6. In terms of biological role, catalyzes the conversion of 1-hydroxy-2-methyl-2-(E)-butenyl 4-diphosphate (HMBPP) into a mixture of isopentenyl diphosphate (IPP) and dimethylallyl diphosphate (DMAPP). Acts in the terminal step of the DOXP/MEP pathway for isoprenoid precursor biosynthesis. This is 4-hydroxy-3-methylbut-2-enyl diphosphate reductase from Nitrosomonas europaea (strain ATCC 19718 / CIP 103999 / KCTC 2705 / NBRC 14298).